Here is a 58-residue protein sequence, read N- to C-terminus: uncharacterized protein (58 aa).

It localises to the plastid. The protein localises to the chloroplast. This is an uncharacterized protein from Porphyra purpurea (Red seaweed).